The following is a 249-amino-acid chain: Deoxyribose-phosphate aldolase (249 aa).

The Proton donor/acceptor role is filled by Asp-94. The active-site Schiff-base intermediate with acetaldehyde is the Lys-158. Lys-200 (proton donor/acceptor) is an active-site residue.

This sequence belongs to the DeoC/FbaB aldolase family. DeoC type 1 subfamily.

The protein resides in the cytoplasm. It catalyses the reaction 2-deoxy-D-ribose 5-phosphate = D-glyceraldehyde 3-phosphate + acetaldehyde. Its pathway is carbohydrate degradation; 2-deoxy-D-ribose 1-phosphate degradation; D-glyceraldehyde 3-phosphate and acetaldehyde from 2-deoxy-alpha-D-ribose 1-phosphate: step 2/2. Catalyzes a reversible aldol reaction between acetaldehyde and D-glyceraldehyde 3-phosphate to generate 2-deoxy-D-ribose 5-phosphate. The sequence is that of Deoxyribose-phosphate aldolase from Thermoplasma volcanium (strain ATCC 51530 / DSM 4299 / JCM 9571 / NBRC 15438 / GSS1).